A 522-amino-acid polypeptide reads, in one-letter code: Cytochrome P450 9c1 (522 aa).

Cysteine 464 provides a ligand contact to heme.

The protein belongs to the cytochrome P450 family. Requires heme as cofactor.

The protein localises to the endoplasmic reticulum membrane. The protein resides in the microsome membrane. Its function is as follows. May be involved in the metabolism of insect hormones and in the breakdown of synthetic insecticides. The chain is Cytochrome P450 9c1 (Cyp9c1) from Drosophila melanogaster (Fruit fly).